Here is a 646-residue protein sequence, read N- to C-terminus: MSLPKKKIGIFAFFLLTVFTITLKTYFSYYVDFSLGVKGLVQNLILIMNPYSLIALVLSVFLFFKGKKAFWFIFIGGFLLTFLLYANVVYFRFFSDFLTFSTLNQAGNVESMGGAVSASFKWYDFVYFIDTIIYLAILIFKRKWLDNRAFSKKFVPVVMATSVALFFLNLAFAETDRPELLTRTFDHKYLVKYLGPYNFTVYDGVKTIENNQQKALASEDDLTKVLNYTKQKRTEPNPEYYGAAKKKNIIKIHLESFQTFLINKKVNGKEVTPFLNKLSSGNQDFTYFPNFFHQTGQGKTSDSEFTMDNSLYGLPQGSAYSLKGDNTYQSLPAILDQKQGYTSNVMHGDYKTFWNRDQVYKHFGIDNFYDATYYDMSDDNIVNLGLKDKPFFKASADYQSKMKKPFYSHLITLTNHYPFTLDEEDASIDKPNTGDSTVDGYIQTAHYLDQALEEYITDLKKKGLYDNSVIMIYGDHYGISENHNNAMEKLLGEKITPAKFTDLNRTGFWLKVPGKSGGVNKEYAGQMDVMPTLLHLVGIDSKNYLMFGSDMFSKQHNNVVPFRNGDFITEDYKYVNGKIYSNKDNELLTEKPKDFDKNKKQVEKDLEMSDSVLNGDLFRFYKNPDFKKVNPGKYEYKSGPKGNEKK.

The Cytoplasmic portion of the chain corresponds to 1 to 7; sequence MSLPKKK. A helical transmembrane segment spans residues 8 to 28; sequence IGIFAFFLLTVFTITLKTYFS. Residues 29–43 lie on the Extracellular side of the membrane; that stretch reads YYVDFSLGVKGLVQN. Residues 44-64 traverse the membrane as a helical segment; that stretch reads LILIMNPYSLIALVLSVFLFF. Over 65–68 the chain is Cytoplasmic; that stretch reads KGKK. Residues 69 to 89 form a helical membrane-spanning segment; sequence AFWFIFIGGFLLTFLLYANVV. Residues 90 to 119 are Extracellular-facing; that stretch reads YFRFFSDFLTFSTLNQAGNVESMGGAVSAS. The chain crosses the membrane as a helical span at residues 120–140; sequence FKWYDFVYFIDTIIYLAILIF. Topologically, residues 141–153 are cytoplasmic; the sequence is KRKWLDNRAFSKK. Residues 154-174 traverse the membrane as a helical segment; the sequence is FVPVVMATSVALFFLNLAFAE. Topologically, residues 175 to 646 are extracellular; sequence TDRPELLTRT…KSGPKGNEKK (472 aa). E255 and T300 together coordinate Mn(2+). The active site involves T300. H416 lines the substrate pocket. Mn(2+) contacts are provided by D475 and H476.

This sequence belongs to the LTA synthase family. Proteolytically cleaved.

Its subcellular location is the cell membrane. It is found in the secreted. It functions in the pathway cell wall biogenesis; lipoteichoic acid biosynthesis. Functionally, catalyzes the polymerization of lipoteichoic acid (LTA) polyglycerol phosphate, a reaction that presumably uses phosphatidylglycerol (PG) as substrate. Is required for staphylococcal growth and cell division process. The polypeptide is Lipoteichoic acid synthase (ltaS) (Staphylococcus epidermidis (strain ATCC 12228 / FDA PCI 1200)).